A 148-amino-acid polypeptide reads, in one-letter code: 3-dehydroquinate dehydratase (148 aa).

Residue tyrosine 23 is the Proton acceptor of the active site. 3 residues coordinate substrate: asparagine 74, histidine 80, and aspartate 87. Histidine 100 functions as the Proton donor in the catalytic mechanism. Substrate contacts are provided by residues 101–102 and arginine 111; that span reads IS.

The protein belongs to the type-II 3-dehydroquinase family. As to quaternary structure, homododecamer.

It catalyses the reaction 3-dehydroquinate = 3-dehydroshikimate + H2O. It functions in the pathway metabolic intermediate biosynthesis; chorismate biosynthesis; chorismate from D-erythrose 4-phosphate and phosphoenolpyruvate: step 3/7. Catalyzes a trans-dehydration via an enolate intermediate. This is 3-dehydroquinate dehydratase from Anoxybacillus flavithermus (strain DSM 21510 / WK1).